Reading from the N-terminus, the 649-residue chain is Archaeal Lon protease (649 aa).

Topologically, residues 1–114 (MFSIKFKTTE…KLDFKAPSST (114 aa)) are cytoplasmic. 47 to 54 (GDPGVGKS) contributes to the ATP binding site. A helical transmembrane segment spans residues 115-135 (TLLLIMIGAILLSEYLLKYLP). At 136 to 138 (QNY) the chain is on the extracellular side. A helical transmembrane segment spans residues 139–159 (LLAAVTITALIVLIFGFVIIL). The Cytoplasmic segment spans residues 160 to 649 (TSIMGASRAS…DNRGGAERFN (490 aa)). One can recognise a Lon proteolytic domain in the interval 456 to 639 (EPKVGVIYGL…DEIVPLVFDL (184 aa)). Residues S550 and K593 contribute to the active site.

Belongs to the peptidase S16 family. Archaeal LonB subfamily. Homohexamer. Organized in a ring with a central cavity.

It is found in the cell membrane. In terms of biological role, ATP-dependent serine protease that mediates the selective degradation of mutant and abnormal proteins as well as certain short-lived regulatory proteins. Degrades polypeptides processively. This Methanocaldococcus jannaschii (strain ATCC 43067 / DSM 2661 / JAL-1 / JCM 10045 / NBRC 100440) (Methanococcus jannaschii) protein is Archaeal Lon protease.